A 378-amino-acid polypeptide reads, in one-letter code: GTP cyclohydrolase-2 (378 aa).

The DHBP synthase-like stretch occupies residues 1 to 180 (MEEVSSHVKS…IKDMIEFRIK (180 aa)). Residues 181–378 (SEKIVERVIE…KMGHLICFND (198 aa)) are GTP cyclohydrolase II. GTP is bound at residue 229–233 (RIHSE). 3 residues coordinate Zn(2+): Cys234, Cys245, and Cys247. GTP-binding positions include Gln250, 273 to 275 (EGR), and Thr295. The active-site Proton acceptor is Asp307. Residue Arg309 is the Nucleophile of the active site. 2 residues coordinate GTP: Thr330 and Lys335.

This sequence in the N-terminal section; belongs to the DHBP synthase family. It in the C-terminal section; belongs to the GTP cyclohydrolase II family. The cofactor is Zn(2+).

The catalysed reaction is GTP + 4 H2O = 2,5-diamino-6-hydroxy-4-(5-phosphoribosylamino)-pyrimidine + formate + 2 phosphate + 3 H(+). Its pathway is cofactor biosynthesis; riboflavin biosynthesis; 5-amino-6-(D-ribitylamino)uracil from GTP: step 1/4. Its function is as follows. Catalyzes the conversion of GTP to 2,5-diamino-6-ribosylamino-4(3H)-pyrimidinone 5'-phosphate (DARP), formate and pyrophosphate. This chain is GTP cyclohydrolase-2 (ribA), found in Archaeoglobus fulgidus (strain ATCC 49558 / DSM 4304 / JCM 9628 / NBRC 100126 / VC-16).